The following is a 126-amino-acid chain: Protein ApaG (126 aa).

Residues 2–126 (SALDTSIRVE…FRLTTPGLLH (125 aa)) form the ApaG domain.

In Shewanella baltica (strain OS195), this protein is Protein ApaG.